The following is a 186-amino-acid chain: Ion-translocating oxidoreductase complex subunit B (186 aa).

Positions 1-23 are hydrophobic; sequence MLTPILALTALALIAGALLGFAA. In terms of domain architecture, 4Fe-4S spans 29–88; the sequence is EGNPIADQVDAVLPQTQCGQCGFGGCRPYAEAIAAGEAEINRCPPGGQDTVQTLADLLGV. [4Fe-4S] cluster-binding residues include Cys46, Cys49, Cys54, Cys71, Cys114, Cys117, Cys120, Cys124, Cys144, Cys147, Cys150, and Cys154. 4Fe-4S ferredoxin-type domains follow at residues 105–134 and 135–164; these read QVAW…GAAK and QMHT…MVPV.

This sequence belongs to the 4Fe4S bacterial-type ferredoxin family. RnfB subfamily. As to quaternary structure, the complex is composed of six subunits: RnfA, RnfB, RnfC, RnfD, RnfE and RnfG. [4Fe-4S] cluster serves as cofactor.

The protein localises to the cell inner membrane. Its function is as follows. Part of a membrane-bound complex that couples electron transfer with translocation of ions across the membrane. The polypeptide is Ion-translocating oxidoreductase complex subunit B (Alkalilimnicola ehrlichii (strain ATCC BAA-1101 / DSM 17681 / MLHE-1)).